Here is a 328-residue protein sequence, read N- to C-terminus: MIEKIWSGESPLWRLLLPLSWLYGLVSGAIRLCYKLKLKRAWRAPVPVVVVGNLTAGGNGKTPVVVWLVEQLQQRGIRVGVVSRGYGSKAESYPLLLSADTTTAQAGDEPVLIYQRTDAPVAVSPVRSDAVKAILAQHPDVQIIVTDDGLQHYRLARDVEIVVIDGVRRFGNGWWLPAGPMRERAGRLKSVDAVIVNGGVPRSGEIPMHLLPGQAVNLRTGTRCDVAQLEHVVAMAGIGHPPRFFATLKMCGVQPEKCVPLADHQSLNHADVSALVSAGQTLVMTEKDAVKCRAFAEENWWYLPVDAQLSGDEPAKLLTQLTSLASGN.

55–62 (TAGGNGKT) serves as a coordination point for ATP.

This sequence belongs to the LpxK family.

The catalysed reaction is a lipid A disaccharide + ATP = a lipid IVA + ADP + H(+). Its pathway is glycolipid biosynthesis; lipid IV(A) biosynthesis; lipid IV(A) from (3R)-3-hydroxytetradecanoyl-[acyl-carrier-protein] and UDP-N-acetyl-alpha-D-glucosamine: step 6/6. Its function is as follows. Transfers the gamma-phosphate of ATP to the 4'-position of a tetraacyldisaccharide 1-phosphate intermediate (termed DS-1-P) to form tetraacyldisaccharide 1,4'-bis-phosphate (lipid IVA). The polypeptide is Tetraacyldisaccharide 4'-kinase (Shigella boydii serotype 18 (strain CDC 3083-94 / BS512)).